The following is a 436-amino-acid chain: MSDRQQVTNARGERIAIVAGLRTPFAKQATAFHGISALDMGKMVVNELLVRSELDPKLIEQLVYGQVVQMPAAPNIAREIVLGTGMDVSTDAYSVTRACATSFQSAVNVAESIMTGNIEIGIAGGADSSSVLPIGVSKKLAHALVDLNKARTFGQKLQIFRRLGIKDLLPVPPAVAEYSTGLSMGQTAEQMAKTYNISRADQDALAHRSHTLANETWASGHLRDEVMVAHVPPYKQFIERDNNIRENSDLASYAKLRPAFDKKHGSVTAANSTPLTDGASAIILMSEGRAKALGYQPIGYIKSYAFTAIDVWQDMLMGPSYATPLALKRAGMELEDLTLIEMHEAFAAQTLANMQMFASKKFAEEKLGRNRAIGDIDMSKFNVLGGSLAYGHPFAATGTRLITQVCRELKRRGGGTGLATACAAGGLGAAMIVEVE.

The Acyl-thioester intermediate role is filled by cysteine 99. Catalysis depends on proton acceptor residues histidine 392 and cysteine 422.

Belongs to the thiolase-like superfamily. Thiolase family. In terms of assembly, heterotetramer of two alpha chains (FadJ) and two beta chains (FadI).

Its subcellular location is the cytoplasm. The catalysed reaction is an acyl-CoA + acetyl-CoA = a 3-oxoacyl-CoA + CoA. It participates in lipid metabolism; fatty acid beta-oxidation. Its function is as follows. Catalyzes the final step of fatty acid oxidation in which acetyl-CoA is released and the CoA ester of a fatty acid two carbons shorter is formed. The sequence is that of 3-ketoacyl-CoA thiolase from Shewanella oneidensis (strain ATCC 700550 / JCM 31522 / CIP 106686 / LMG 19005 / NCIMB 14063 / MR-1).